The primary structure comprises 295 residues: Bifunctional protein FolD (295 aa).

NADP(+) contacts are provided by residues 166-168, Ser-195, and Ile-236; that span reads GRS.

It belongs to the tetrahydrofolate dehydrogenase/cyclohydrolase family. In terms of assembly, homodimer.

The enzyme catalyses (6R)-5,10-methylene-5,6,7,8-tetrahydrofolate + NADP(+) = (6R)-5,10-methenyltetrahydrofolate + NADPH. It catalyses the reaction (6R)-5,10-methenyltetrahydrofolate + H2O = (6R)-10-formyltetrahydrofolate + H(+). The protein operates within one-carbon metabolism; tetrahydrofolate interconversion. Functionally, catalyzes the oxidation of 5,10-methylenetetrahydrofolate to 5,10-methenyltetrahydrofolate and then the hydrolysis of 5,10-methenyltetrahydrofolate to 10-formyltetrahydrofolate. In Chlorobium phaeobacteroides (strain DSM 266 / SMG 266 / 2430), this protein is Bifunctional protein FolD.